The primary structure comprises 457 residues: Squalene epoxidase erg1 (457 aa).

Residues 15 to 16, 35 to 36, R43, R114, V130, D293, and M306 each bind FAD; these read IT and ER. The next 3 helical transmembrane spans lie at 347–364, 409–429, and 433–453; these read GYSF…KLFT, FYAV…ALLM, and IIES…YILS.

This sequence belongs to the squalene monooxygenase family. FAD serves as cofactor.

It is found in the microsome membrane. The protein resides in the endoplasmic reticulum membrane. Its subcellular location is the vacuole membrane. It catalyses the reaction squalene + reduced [NADPH--hemoprotein reductase] + O2 = (S)-2,3-epoxysqualene + oxidized [NADPH--hemoprotein reductase] + H2O + H(+). The protein operates within terpene metabolism; lanosterol biosynthesis; lanosterol from farnesyl diphosphate: step 2/3. Its pathway is steroid metabolism; ergosterol biosynthesis. With respect to regulation, activity is blocked by the allylamine class antifungal terbinafine. Functionally, squalene epoxidase; part of the third module of ergosterol biosynthesis pathway that includes by the late steps of the pathway. Erg1 catalyzes the epoxidation of squalene into 2,3-epoxysqualene. The third module or late pathway involves the ergosterol synthesis itself through consecutive reactions that mainly occur in the endoplasmic reticulum (ER) membrane. Firstly, the squalene synthase erg9 catalyzes the condensation of 2 farnesyl pyrophosphate moieties to form squalene, which is the precursor of all steroids. Secondly, squalene is converted into lanosterol by the consecutive action of the squalene epoxidase erg1 and the lanosterol synthase erg7. The lanosterol 14-alpha-demethylase erg11/cyp1 catalyzes C14-demethylation of lanosterol to produce 4,4'-dimethyl cholesta-8,14,24-triene-3-beta-ol. In the next steps, a complex process involving various demethylation, reduction and desaturation reactions catalyzed by the C-14 reductase erg24 and the C-4 demethylation complex erg25-erg26-erg27 leads to the production of zymosterol. Erg28 likely functions in the C-4 demethylation complex reaction by tethering erg26 and Erg27 to the endoplasmic reticulum or to facilitate interaction between these proteins. Then, the sterol 24-C-methyltransferase erg6 catalyzes the methyl transfer from S-adenosyl-methionine to the C-24 of zymosterol to form fecosterol. The C-8 sterol isomerase erg2 catalyzes the reaction which results in unsaturation at C-7 in the B ring of sterols and thus converts fecosterol to episterol. The sterol-C5-desaturases erg31 and erg32 then catalyze the introduction of a C-5 double bond in the B ring to produce 5-dehydroepisterol. The C-22 sterol desaturase erg5 further converts 5-dehydroepisterol into ergosta-5,7,22,24(28)-tetraen-3beta-ol by forming the C-22(23) double bond in the sterol side chain. Finally, ergosta-5,7,22,24(28)-tetraen-3beta-ol is substrate of the C-24(28) sterol reductase erg4 to produce ergosterol. In the genus Schizosaccharomyces, a second route exists between lanosterol and fecosterol, via the methylation of lanosterol to eburicol by erg6, followed by C14-demethylation by erg11/cyp1 and C4-demethylation by the demethylation complex erg25-erg26-erg27. This chain is Squalene epoxidase erg1, found in Schizosaccharomyces pombe (strain 972 / ATCC 24843) (Fission yeast).